The chain runs to 302 residues: Recombination-associated protein RdgC (302 aa).

It belongs to the RdgC family.

It localises to the cytoplasm. It is found in the nucleoid. Its function is as follows. May be involved in recombination. This chain is Recombination-associated protein RdgC, found in Xylella fastidiosa (strain M23).